A 133-amino-acid polypeptide reads, in one-letter code: uncharacterized protein (133 aa).

The N-terminal stretch at 1–22 is a signal peptide; that stretch reads MYRSSISIQVFICVLFLPLDSG. Residue N111 is glycosylated (N-linked (GlcNAc...) asparagine).

It is found in the secreted. This is an uncharacterized protein from Saccharomyces cerevisiae (strain ATCC 204508 / S288c) (Baker's yeast).